The primary structure comprises 473 residues: Glutamate--tRNA ligase (473 aa).

The 'HIGH' region motif lies at 11-21 (PSPTGFLHIGG). Positions 240–244 (KLSKR) match the 'KMSKS' region motif. Position 243 (Lys-243) interacts with ATP.

It belongs to the class-I aminoacyl-tRNA synthetase family. Glutamate--tRNA ligase type 1 subfamily. As to quaternary structure, monomer.

The protein resides in the cytoplasm. The catalysed reaction is tRNA(Glu) + L-glutamate + ATP = L-glutamyl-tRNA(Glu) + AMP + diphosphate. Functionally, catalyzes the attachment of glutamate to tRNA(Glu) in a two-step reaction: glutamate is first activated by ATP to form Glu-AMP and then transferred to the acceptor end of tRNA(Glu). In Rhodopseudomonas palustris (strain ATCC BAA-98 / CGA009), this protein is Glutamate--tRNA ligase.